The primary structure comprises 527 residues: Pentatricopeptide repeat-containing protein At5g41170, mitochondrial (527 aa).

The transit peptide at 1–35 (MAMRFFQLHRNRLVKGNSGKALSFSRLLDLSFWVR) directs the protein to the mitochondrion. PPR repeat units follow at residues 36–70 (AFCN…RPLP), 71–105 (SIID…GVSH), 106–140 (DLYT…GFEP), 141–175 (DIVT…GIKP), 176–210 (DVVM…GIRP), 211–245 (DVVM…KIKP), 246–280 (DVIT…SIAP), 281–315 (NIFT…GCFP), 316–350 (DVVA…GLTG), 351–385 (NTIT…GVPP), 386–420 (NIRT…EMDG), 424–458 (NIWT…EMDI), 459–493 (GIIT…GVKP), and 494–527 (NVVT…DGVS).

The protein belongs to the PPR family. P subfamily.

Its subcellular location is the mitochondrion. The polypeptide is Pentatricopeptide repeat-containing protein At5g41170, mitochondrial (Arabidopsis thaliana (Mouse-ear cress)).